A 201-amino-acid chain; its full sequence is UPF0301 protein Rleg2_0617 (201 aa).

This sequence belongs to the UPF0301 (AlgH) family.

The chain is UPF0301 protein Rleg2_0617 from Rhizobium leguminosarum bv. trifolii (strain WSM2304).